The following is a 545-amino-acid chain: CTP synthase (545 aa).

The tract at residues 1–266 (MTTRYIFVTG…DDLVIKRFNL (266 aa)) is amidoligase domain. S14 is a binding site for CTP. S14 is a UTP binding site. Residues 15 to 20 (SLGKGI) and D72 each bind ATP. Residues D72 and E140 each contribute to the Mg(2+) site. Residues 147 to 149 (DIE), 187 to 192 (KTKPTQ), and K223 contribute to the CTP site. UTP contacts are provided by residues 187–192 (KTKPTQ) and K223. 239–241 (KDV) contacts ATP. The region spanning 291–542 (TIGMVGKYIE…IAASYAYQKR (252 aa)) is the Glutamine amidotransferase type-1 domain. G352 provides a ligand contact to L-glutamine. Catalysis depends on C379, which acts as the Nucleophile; for glutamine hydrolysis. Residues 380-383 (LGMQ), E403, and R470 contribute to the L-glutamine site. Active-site residues include H515 and E517.

The protein belongs to the CTP synthase family. In terms of assembly, homotetramer.

The enzyme catalyses UTP + L-glutamine + ATP + H2O = CTP + L-glutamate + ADP + phosphate + 2 H(+). The catalysed reaction is L-glutamine + H2O = L-glutamate + NH4(+). It catalyses the reaction UTP + NH4(+) + ATP = CTP + ADP + phosphate + 2 H(+). It functions in the pathway pyrimidine metabolism; CTP biosynthesis via de novo pathway; CTP from UDP: step 2/2. With respect to regulation, allosterically activated by GTP, when glutamine is the substrate; GTP has no effect on the reaction when ammonia is the substrate. The allosteric effector GTP functions by stabilizing the protein conformation that binds the tetrahedral intermediate(s) formed during glutamine hydrolysis. Inhibited by the product CTP, via allosteric rather than competitive inhibition. Its function is as follows. Catalyzes the ATP-dependent amination of UTP to CTP with either L-glutamine or ammonia as the source of nitrogen. Regulates intracellular CTP levels through interactions with the four ribonucleotide triphosphates. This Shewanella frigidimarina (strain NCIMB 400) protein is CTP synthase.